A 284-amino-acid chain; its full sequence is Nucleotide-binding protein VF_0384 (284 aa).

Position 8–15 (8–15) interacts with ATP; sequence GSSGAGKS. Residue 56-59 participates in GTP binding; sequence DIRN.

The protein belongs to the RapZ-like family.

In terms of biological role, displays ATPase and GTPase activities. In Aliivibrio fischeri (strain ATCC 700601 / ES114) (Vibrio fischeri), this protein is Nucleotide-binding protein VF_0384.